Consider the following 335-residue polypeptide: Pyridoxal 5'-phosphate synthase subunit PdxS (335 aa).

A D-ribose 5-phosphate-binding site is contributed by aspartate 30. Lysine 87 functions as the Schiff-base intermediate with D-ribose 5-phosphate in the catalytic mechanism. A D-ribose 5-phosphate-binding site is contributed by glycine 159. Arginine 171 lines the D-glyceraldehyde 3-phosphate pocket. Residues glycine 257 and 278–279 each bind D-ribose 5-phosphate; that span reads GS.

The protein belongs to the PdxS/SNZ family. In the presence of PdxT, forms a dodecamer of heterodimers.

It carries out the reaction aldehydo-D-ribose 5-phosphate + D-glyceraldehyde 3-phosphate + L-glutamine = pyridoxal 5'-phosphate + L-glutamate + phosphate + 3 H2O + H(+). It functions in the pathway cofactor biosynthesis; pyridoxal 5'-phosphate biosynthesis. Functionally, catalyzes the formation of pyridoxal 5'-phosphate from ribose 5-phosphate (RBP), glyceraldehyde 3-phosphate (G3P) and ammonia. The ammonia is provided by the PdxT subunit. Can also use ribulose 5-phosphate and dihydroxyacetone phosphate as substrates, resulting from enzyme-catalyzed isomerization of RBP and G3P, respectively. The protein is Pyridoxal 5'-phosphate synthase subunit PdxS of Thermococcus onnurineus (strain NA1).